Consider the following 122-residue polypeptide: S-adenosylmethionine decarboxylase proenzyme (122 aa).

Catalysis depends on serine 63, which acts as the Schiff-base intermediate with substrate; via pyruvic acid. Serine 63 is subject to Pyruvic acid (Ser); by autocatalysis. Histidine 68 serves as the catalytic Proton acceptor; for processing activity. The active-site Proton donor; for catalytic activity is the cysteine 83.

It belongs to the prokaryotic AdoMetDC family. Type 1 subfamily. Heterotetramer of two alpha and two beta chains arranged as a dimer of alpha/beta heterodimers. Requires pyruvate as cofactor. In terms of processing, is synthesized initially as an inactive proenzyme. Formation of the active enzyme involves a self-maturation process in which the active site pyruvoyl group is generated from an internal serine residue via an autocatalytic post-translational modification. Two non-identical subunits are generated from the proenzyme in this reaction, and the pyruvate is formed at the N-terminus of the alpha chain, which is derived from the carboxyl end of the proenzyme. The post-translation cleavage follows an unusual pathway, termed non-hydrolytic serinolysis, in which the side chain hydroxyl group of the serine supplies its oxygen atom to form the C-terminus of the beta chain, while the remainder of the serine residue undergoes an oxidative deamination to produce ammonia and the pyruvoyl group blocking the N-terminus of the alpha chain.

The catalysed reaction is S-adenosyl-L-methionine + H(+) = S-adenosyl 3-(methylsulfanyl)propylamine + CO2. Its pathway is amine and polyamine biosynthesis; S-adenosylmethioninamine biosynthesis; S-adenosylmethioninamine from S-adenosyl-L-methionine: step 1/1. Its function is as follows. Catalyzes the decarboxylation of S-adenosylmethionine to S-adenosylmethioninamine (dcAdoMet), the propylamine donor required for the synthesis of the polyamines spermine and spermidine from the diamine putrescine. This chain is S-adenosylmethionine decarboxylase proenzyme, found in Methanococcus maripaludis (strain DSM 14266 / JCM 13030 / NBRC 101832 / S2 / LL).